The chain runs to 180 residues: Ribulose bisphosphate carboxylase small subunit, chloroplastic 5 (180 aa).

The N-terminal 56 residues, Met1–Arg56, are a transit peptide targeting the chloroplast.

It belongs to the RuBisCO small chain family. In terms of assembly, heterohexadecamer of 8 large and 8 small subunits.

It is found in the plastid. It localises to the chloroplast. Its function is as follows. RuBisCO catalyzes two reactions: the carboxylation of D-ribulose 1,5-bisphosphate, the primary event in carbon dioxide fixation, as well as the oxidative fragmentation of the pentose substrate. Both reactions occur simultaneously and in competition at the same active site. Although the small subunit is not catalytic it is essential for maximal activity. This is Ribulose bisphosphate carboxylase small subunit, chloroplastic 5 from Solanum tuberosum (Potato).